The following is a 308-amino-acid chain: Phosphoribosylaminoimidazole-succinocarboxamide synthase (308 aa).

The protein belongs to the SAICAR synthetase family.

It carries out the reaction 5-amino-1-(5-phospho-D-ribosyl)imidazole-4-carboxylate + L-aspartate + ATP = (2S)-2-[5-amino-1-(5-phospho-beta-D-ribosyl)imidazole-4-carboxamido]succinate + ADP + phosphate + 2 H(+). It functions in the pathway purine metabolism; IMP biosynthesis via de novo pathway; 5-amino-1-(5-phospho-D-ribosyl)imidazole-4-carboxamide from 5-amino-1-(5-phospho-D-ribosyl)imidazole-4-carboxylate: step 1/2. This chain is Phosphoribosylaminoimidazole-succinocarboxamide synthase, found in Xylella fastidiosa (strain 9a5c).